We begin with the raw amino-acid sequence, 312 residues long: tRNA pseudouridine synthase B (312 aa).

Residue aspartate 37 is the Nucleophile of the active site.

It belongs to the pseudouridine synthase TruB family. Type 1 subfamily.

It catalyses the reaction uridine(55) in tRNA = pseudouridine(55) in tRNA. Responsible for synthesis of pseudouridine from uracil-55 in the psi GC loop of transfer RNAs. This chain is tRNA pseudouridine synthase B, found in Thermus thermophilus (strain ATCC BAA-163 / DSM 7039 / HB27).